A 146-amino-acid chain; its full sequence is Hemoglobin subunit beta (146 aa).

Valine 1 bears the N-acetylvaline mark. The Globin domain occupies 2-146 (HLTAEEKSLV…VANALAHKYH (145 aa)). Residue serine 44 is modified to Phosphoserine. Residue lysine 59 is modified to N6-acetyllysine. Histidine 63 serves as a coordination point for heme b. An N6-acetyllysine modification is found at lysine 82. Histidine 92 is a binding site for heme b. Position 93 is an S-nitrosocysteine (cysteine 93). N6-acetyllysine is present on lysine 144.

The protein belongs to the globin family. As to quaternary structure, heterotetramer of two alpha chains and two beta chains. In terms of tissue distribution, red blood cells.

Its function is as follows. Involved in oxygen transport from the lung to the various peripheral tissues. The protein is Hemoglobin subunit beta (HBB) of Canis latrans (Coyote).